The chain runs to 158 residues: Immunoglobulin J chain (158 aa).

The first 22 residues, 1 to 22, serve as a signal peptide directing secretion; the sequence is MKNHLFFWGVLAIFVQAVLVTA. Disulfide bonds link C36/C122, C95/C115, and C130/C155. An N-linked (GlcNAc...) (complex) asparagine glycan is attached at N72.

As to quaternary structure, part of the secretory IgA (sIgA) complex that consists of two, four or five IgA monomers, and two additional non-Ig polypeptides, namely the JCHAIN and the secretory component (the proteolytic product of PIGR). Part of the secretory IgM (sIgM) complex that consist of five IgM monomers, and two additional non-Ig polypeptides, namely the JCHAIN and the secretory component (the proteolytic product of PIGR). JCHAIN-containing IgM interacts (via CH4 domain) with FCRM (via Ig-like domain). Post-translationally, N-glycosylated. N-glycans attached to Asn-72 varies from truncated, differentially fucosylated to sialylated (NeuGc) complex types: Man3GlcNAc2; GlcNAc2Man3GlcNAc2(Fuc); Gal1GlcNAc1Man3GlcNAc2; GlcNAc2Man3GlcNAc2; GlcNAc1Man3GlcNAc2; GlcNAc1Man2GlcNAc2 and NeuGc1Gal1GlcNAc2Man3GlcNAc2.

The protein resides in the secreted. In terms of biological role, serves to link two monomer units of either IgM or IgA. In the case of IgM, the J chain-joined dimer is a nucleating unit for the IgM pentamer, and in the case of IgA it induces dimers and/or larger polymers. It also helps to bind these immunoglobulins to secretory component. This Equus asinus (Donkey) protein is Immunoglobulin J chain (JCHAIN).